The following is a 171-amino-acid chain: Iron-sulfur cluster assembly protein 1 (171 aa).

The transit peptide at 1–55 (MLRAGGRRLLAPGLRRVLGGGAAAPVAVGGAKAYHERVVDHYENPRNVGSFENDD) directs the protein to the mitochondrion.

It belongs to the NifU family. As to quaternary structure, component of the core Fe-S cluster (ISC) assembly machinery. The cofactor is [2Fe-2S] cluster.

Its subcellular location is the mitochondrion matrix. It functions in the pathway cofactor biosynthesis; iron-sulfur cluster biosynthesis. Functionally, scaffold protein for the de novo synthesis of iron-sulfur (Fe-S) clusters within mitochondria, which is required for maturation of both mitochondrial and cytoplasmic [2Fe-2S] and [4Fe-4S] proteins. First, a [2Fe-2S] cluster is transiently assembled on the scaffold protein ISCU (ISU1, ISU2 or ISU3). In a second step, the cluster is released from ISCU, transferred to a glutaredoxin, followed by the formation of mitochondrial [2Fe-2S] proteins, the synthesis of [4Fe-4S] clusters and their target-specific insertion into the recipient apoproteins. Cluster assembly on ISCU depends on the function of the cysteine desulfurase complex NFS1-ISD11, which serves as the sulfur donor for cluster synthesis, the iron-binding protein frataxin as the putative iron donor, and the electron transfer chain comprised of ferredoxin reductase and ferredoxin, which receive their electrons from NADH. The polypeptide is Iron-sulfur cluster assembly protein 1 (Oryza sativa subsp. japonica (Rice)).